Here is a 192-residue protein sequence, read N- to C-terminus: Peptidyl-tRNA hydrolase (192 aa).

Position 14 (Y14) interacts with tRNA. The active-site Proton acceptor is H19. Positions 66 and 68 each coordinate tRNA.

This sequence belongs to the PTH family. Monomer.

The protein localises to the cytoplasm. The enzyme catalyses an N-acyl-L-alpha-aminoacyl-tRNA + H2O = an N-acyl-L-amino acid + a tRNA + H(+). Hydrolyzes ribosome-free peptidyl-tRNAs (with 1 or more amino acids incorporated), which drop off the ribosome during protein synthesis, or as a result of ribosome stalling. In terms of biological role, catalyzes the release of premature peptidyl moieties from peptidyl-tRNA molecules trapped in stalled 50S ribosomal subunits, and thus maintains levels of free tRNAs and 50S ribosomes. The polypeptide is Peptidyl-tRNA hydrolase (Coprothermobacter proteolyticus (strain ATCC 35245 / DSM 5265 / OCM 4 / BT)).